The following is a 566-amino-acid chain: Chaperone Ric-8 (566 aa).

The protein belongs to the synembryn family. Interacts with GDP-bound G(i)-alpha protein. Does not interact with G-alpha proteins when they are in complex with subunits beta and gamma. Interacts with Frq2 in a Ca(2+)-independent manner but does not interact with Frq1.

The protein localises to the cytoplasm. The protein resides in the cell cortex. Its subcellular location is the presynapse. Its function is as follows. Chaperone that specifically binds and folds some, but not all, nascent G alpha proteins prior to G protein heterotrimer formation, promoting their stability and activity. Also acts as a guanine nucleotide exchange factor (GEF) for G alpha proteins by stimulating exchange of bound GDP for free GTP. Plays a key role in asymmetric spindle positioning, a step for asymmetric cell division that generates cell diversity during development by activating G(i) alpha protein independently of G-protein coupled receptors. Required during gastrulation and sensory organ precursor (SOP) formation. Plays a role in positively regulating synapse number and neurotransmitter release. This chain is Chaperone Ric-8 (ric8a), found in Drosophila pseudoobscura pseudoobscura (Fruit fly).